A 626-amino-acid polypeptide reads, in one-letter code: DNA mismatch repair protein MutL (626 aa).

Disordered regions lie at residues 385–413 and 418–437; these read SGASVPPPSIDPVESSFGSGSGEPYPSMV and LTPSADQPSAADEQNPVAPD.

The protein belongs to the DNA mismatch repair MutL/HexB family.

Functionally, this protein is involved in the repair of mismatches in DNA. It is required for dam-dependent methyl-directed DNA mismatch repair. May act as a 'molecular matchmaker', a protein that promotes the formation of a stable complex between two or more DNA-binding proteins in an ATP-dependent manner without itself being part of a final effector complex. This is DNA mismatch repair protein MutL from Chlorobaculum parvum (strain DSM 263 / NCIMB 8327) (Chlorobium vibrioforme subsp. thiosulfatophilum).